A 372-amino-acid chain; its full sequence is Glutamate 5-kinase (372 aa).

K14 lines the ATP pocket. Positions 54, 141, and 153 each coordinate substrate. 173–174 (TD) lines the ATP pocket. The 79-residue stretch at 280-358 (RGHVVIDAGA…GEIETVLGYM (79 aa)) folds into the PUA domain.

Belongs to the glutamate 5-kinase family.

The protein localises to the cytoplasm. The enzyme catalyses L-glutamate + ATP = L-glutamyl 5-phosphate + ADP. The protein operates within amino-acid biosynthesis; L-proline biosynthesis; L-glutamate 5-semialdehyde from L-glutamate: step 1/2. Its function is as follows. Catalyzes the transfer of a phosphate group to glutamate to form L-glutamate 5-phosphate. The chain is Glutamate 5-kinase from Burkholderia orbicola (strain AU 1054).